Here is a 109-residue protein sequence, read N- to C-terminus: ATP-dependent Clp protease adapter protein ClpS (109 aa).

The protein belongs to the ClpS family. In terms of assembly, binds to the N-terminal domain of the chaperone ClpA.

Functionally, involved in the modulation of the specificity of the ClpAP-mediated ATP-dependent protein degradation. This chain is ATP-dependent Clp protease adapter protein ClpS, found in Lawsonia intracellularis (strain PHE/MN1-00).